A 110-amino-acid chain; its full sequence is MEVTAKLRGARLSAQKARLVADLVRGKPVAEALDVLAYSPKKAAKVVKKVLQSAIANAEENNGMDIDELRVSTICVDEGMTLKRIQPRAKGRADRILKRTCHITVKVAEK.

It belongs to the universal ribosomal protein uL22 family. As to quaternary structure, part of the 50S ribosomal subunit.

Its function is as follows. This protein binds specifically to 23S rRNA; its binding is stimulated by other ribosomal proteins, e.g. L4, L17, and L20. It is important during the early stages of 50S assembly. It makes multiple contacts with different domains of the 23S rRNA in the assembled 50S subunit and ribosome. In terms of biological role, the globular domain of the protein is located near the polypeptide exit tunnel on the outside of the subunit, while an extended beta-hairpin is found that lines the wall of the exit tunnel in the center of the 70S ribosome. The sequence is that of Large ribosomal subunit protein uL22 from Chromohalobacter salexigens (strain ATCC BAA-138 / DSM 3043 / CIP 106854 / NCIMB 13768 / 1H11).